We begin with the raw amino-acid sequence, 504 residues long: Argininosuccinate lyase 2 (504 aa).

Belongs to the lyase 1 family. Argininosuccinate lyase subfamily.

Its subcellular location is the cytoplasm. It catalyses the reaction 2-(N(omega)-L-arginino)succinate = fumarate + L-arginine. Its pathway is amino-acid biosynthesis; L-arginine biosynthesis; L-arginine from L-ornithine and carbamoyl phosphate: step 3/3. In Agrobacterium fabrum (strain C58 / ATCC 33970) (Agrobacterium tumefaciens (strain C58)), this protein is Argininosuccinate lyase 2.